Reading from the N-terminus, the 782-residue chain is E3 UFM1-protein ligase 1 homolog (782 aa).

The tract at residues 405–478 (VSTQELEDDG…TRGGGGASKK (74 aa)) is disordered.

It belongs to the UFL1 family.

Its function is as follows. E3 UFM1-protein ligase that mediates ufmylation of target proteins. This is E3 UFM1-protein ligase 1 homolog from Drosophila sechellia (Fruit fly).